The primary structure comprises 548 residues: Chaperonin GroEL (548 aa).

ATP is bound by residues 30–33 (TLGP), Lys51, 87–91 (DGTTT), Gly415, and Asp494.

Belongs to the chaperonin (HSP60) family. Forms a cylinder of 14 subunits composed of two heptameric rings stacked back-to-back. Interacts with the co-chaperonin GroES.

The protein resides in the cytoplasm. The catalysed reaction is ATP + H2O + a folded polypeptide = ADP + phosphate + an unfolded polypeptide.. Functionally, together with its co-chaperonin GroES, plays an essential role in assisting protein folding. The GroEL-GroES system forms a nano-cage that allows encapsulation of the non-native substrate proteins and provides a physical environment optimized to promote and accelerate protein folding. The chain is Chaperonin GroEL from Oleispira antarctica.